Reading from the N-terminus, the 117-residue chain is DNA-binding protein RdgB (117 aa).

A DNA-binding region (H-T-H motif) is located at residues 82 to 102 (NHSALAKKYNVSLQWIYKIVR).

The protein belongs to the c/mor transcriptional regulatory family.

Functionally, regulates pectin lyase production in response to DNA damage. This Pectobacterium carotovorum subsp. carotovorum (Erwinia carotovora subsp. carotovora) protein is DNA-binding protein RdgB (rdgB).